A 138-amino-acid polypeptide reads, in one-letter code: Transcription antitermination protein NusB (138 aa).

The protein belongs to the NusB family.

Involved in transcription antitermination. Required for transcription of ribosomal RNA (rRNA) genes. Binds specifically to the boxA antiterminator sequence of the ribosomal RNA (rrn) operons. This Desulforudis audaxviator (strain MP104C) protein is Transcription antitermination protein NusB.